Consider the following 429-residue polypeptide: Glycogenin-1 (429 aa).

UDP contacts are provided by Leu8, Thr10, Asn11, Tyr14, and Arg76. UDP-alpha-D-glucose contacts are provided by Leu8, Thr10, Asn11, Tyr14, Arg76, Lys85, Asp101, Ala102, Asp103, Asn132, Ser133, Asp159, Asp162, and Gln163. UDP is bound by residues Asp101, Ala102, and Asp103. Mn(2+) is bound at residue Asp101. A Mn(2+)-binding site is contributed by Asp103. Tyr194 carries an O-linked (Glc...) tyrosine glycan. UDP-binding residues include His211, Gly214, and Lys217. His211 contributes to the Mn(2+) binding site. The UDP-alpha-D-glucose site is built by Gly214 and Lys217. Disordered stretches follow at residues 254–274 and 300–338; these read VFPSHHHTPEHRSHSADHPKI and SYDTDANTSDSHRNNEPHKHDQQREEHHELPHNKFQTPH. 2 stretches are compositionally biased toward basic and acidic residues: residues 263–274 and 309–338; these read EHRSHSADHPKI and DSHRNNEPHKHDQQREEHHELPHNKFQTPH.

It belongs to the glycosyltransferase 8 family. Glycogenin subfamily. As to quaternary structure, forms a heterooctamer with one molecule of gyg-1 bound to each protomer of the gys-1 homotetramer. The N-terminus of gys-1 is involved in interprotomer contacts with gyg-1. The interaction with gys-1 is required for glycogen production but is not required for gys-1 intrinsic activity. Mn(2+) serves as cofactor. Post-translationally, self-glycosylated by the transfer of glucose residues from UDP-glucose to itself, forming an alpha-1,4-glycan of around 10 residues attached to Tyr-194.

It localises to the cytoplasm. It is found in the nucleus. The catalysed reaction is L-tyrosyl-[glycogenin] + UDP-alpha-D-glucose = alpha-D-glucosyl-L-tyrosyl-[glycogenin] + UDP + H(+). It catalyses the reaction [1,4-alpha-D-glucosyl](n)-L-tyrosyl-[glycogenin] + UDP-alpha-D-glucose = [1,4-alpha-D-glucosyl](n+1)-L-tyrosyl-[glycogenin] + UDP + H(+). It functions in the pathway glycan biosynthesis; glycogen biosynthesis. Its function is as follows. Self-glucosylating initiator of glycogen synthesis. It catalyzes the formation of a short alpha (1,4)-glucosyl chain covalently attached via a glucose 1-O-tyrosyl linkage to internal tyrosine residues and these chains act as primers for the elongation reaction catalyzed by glycogen synthase. The chain is Glycogenin-1 from Caenorhabditis elegans.